The primary structure comprises 340 residues: UDP-3-O-acylglucosamine N-acyltransferase (340 aa).

His-247 (proton acceptor) is an active-site residue.

It belongs to the transferase hexapeptide repeat family. LpxD subfamily. In terms of assembly, homotrimer.

It carries out the reaction a UDP-3-O-[(3R)-3-hydroxyacyl]-alpha-D-glucosamine + a (3R)-hydroxyacyl-[ACP] = a UDP-2-N,3-O-bis[(3R)-3-hydroxyacyl]-alpha-D-glucosamine + holo-[ACP] + H(+). The protein operates within bacterial outer membrane biogenesis; LPS lipid A biosynthesis. In terms of biological role, catalyzes the N-acylation of UDP-3-O-acylglucosamine using 3-hydroxyacyl-ACP as the acyl donor. Is involved in the biosynthesis of lipid A, a phosphorylated glycolipid that anchors the lipopolysaccharide to the outer membrane of the cell. In Caulobacter sp. (strain K31), this protein is UDP-3-O-acylglucosamine N-acyltransferase.